The primary structure comprises 318 residues: Olfactory receptor 13C2 (318 aa).

Over methionine 1–leucine 25 the chain is Extracellular. N-linked (GlcNAc...) asparagine glycosylation occurs at asparagine 5. A helical transmembrane segment spans residues leucine 26–isoleucine 46. Residues leucine 47–histidine 54 lie on the Cytoplasmic side of the membrane. Residues leucine 55–threonine 75 form a helical membrane-spanning segment. The Extracellular portion of the chain corresponds to threonine 76–valine 99. Cysteines 97 and 189 form a disulfide. Residues glutamine 100–phenylalanine 120 form a helical membrane-spanning segment. The Cytoplasmic portion of the chain corresponds to aspartate 121 to aspartate 139. A helical transmembrane segment spans residues alanine 140–serine 160. The Extracellular segment spans residues valine 161–phenylalanine 197. Residues isoleucine 198–serine 217 form a helical membrane-spanning segment. Residues tyrosine 218–alanine 237 are Cytoplasmic-facing. The helical transmembrane segment at serine 238 to methionine 258 threads the bilayer. The Extracellular portion of the chain corresponds to tyrosine 259–aspartate 277. The helical transmembrane segment at lysine 278 to leucine 298 threads the bilayer. Topologically, residues arginine 299–lysine 318 are cytoplasmic.

The protein belongs to the G-protein coupled receptor 1 family.

It is found in the cell membrane. In terms of biological role, odorant receptor. This chain is Olfactory receptor 13C2 (OR13C2), found in Homo sapiens (Human).